A 321-amino-acid polypeptide reads, in one-letter code: Cytochrome c biogenesis protein CcsA (321 aa).

A run of 8 helical transmembrane segments spans residues 12-32 (HISF…LLVY), 45-62 (MIAT…RWIS), 71-91 (LYES…ILYI), 98-117 (LNAI…TSGL), 143-163 (MLLS…LIVI), 227-247 (VISL…VWAN), 260-277 (ETWA…LHTR), and 292-312 (VASI…LLGI).

This sequence belongs to the CcmF/CycK/Ccl1/NrfE/CcsA family. In terms of assembly, may interact with Ccs1.

It localises to the plastid. Its subcellular location is the chloroplast thylakoid membrane. In terms of biological role, required during biogenesis of c-type cytochromes (cytochrome c6 and cytochrome f) at the step of heme attachment. In Phalaenopsis aphrodite subsp. formosana (Moth orchid), this protein is Cytochrome c biogenesis protein CcsA.